The following is a 522-amino-acid chain: MAAAISYTPPWWVNLLHRLPHLNLQWESLNGDFRPEDPDYQQSLMLLACVALSCLALDLLFLLFYSFWFCCRHRKTEENTNADCCCTVWCVIVATLVCSAGIAVGFYGNGETSDGIHRVTYSIRHVNRTMAGIHDRVSDTTTSLNQTVEPCLQNLEVMFTKQTDYLRIVQRLQSLLYTLVQQTSEIPFWKNHYLLDEFAAQVDLFDWYRWLGYLGLLLFHVFICLLVLFGLIRNSKGTLICVCFLGMMALIISWASMGLELAVAVGSSDFCVNPDTFVSKMVEEKSVLRADILNYYLVCNTGSPNPFQQMLSSGHKALVEMQDDVRDLLRSAVKEYPNSKDYLVCIQGVLNSTEINLQHLTALVDCRGLHLDYVQSLTGFCYDGVEGLIYLVLFSFVTALMFSSIVCSVPHTWQQRRANYEEGDEETTTPGTRQTHDNLYRVHMPSLYSCGSSYGSETSIPAAAHTVSNAPVTEYMSQNANFQNPRCENTPLIGRESPPPSYTSSMRAKYLATNRPETDPVH.

The Extracellular segment spans residues 1–43 (MAAAISYTPPWWVNLLHRLPHLNLQWESLNGDFRPEDPDYQQS). The helical transmembrane segment at 44-64 (LMLLACVALSCLALDLLFLLF) threads the bilayer. Over 65-87 (YSFWFCCRHRKTEENTNADCCCT) the chain is Cytoplasmic. A helical transmembrane segment spans residues 88-108 (VWCVIVATLVCSAGIAVGFYG). The Extracellular segment spans residues 109-211 (NGETSDGIHR…VDLFDWYRWL (103 aa)). 2 residues coordinate Ca(2+): Glu111 and Asp114. N-linked (GlcNAc...) asparagine glycosylation is found at Asn127 and Asn145. The helical transmembrane segment at 212 to 232 (GYLGLLLFHVFICLLVLFGLI) threads the bilayer. Residues 233-238 (RNSKGT) are Cytoplasmic-facing. A helical membrane pass occupies residues 239–259 (LICVCFLGMMALIISWASMGL). Topologically, residues 260 to 386 (ELAVAVGSSD…LTGFCYDGVE (127 aa)) are extracellular. 2 cysteine pairs are disulfide-bonded: Cys271–Cys381 and Cys299–Cys366. Asn351 carries an N-linked (GlcNAc...) asparagine glycan. Residues 387–407 (GLIYLVLFSFVTALMFSSIVC) traverse the membrane as a helical segment. The Cytoplasmic portion of the chain corresponds to 408-522 (SVPHTWQQRR…TNRPETDPVH (115 aa)). Positions 483 to 522 (QNPRCENTPLIGRESPPPSYTSSMRAKYLATNRPETDPVH) are disordered.

This sequence belongs to the tweety family. In terms of assembly, homotetramer; disulfide-linked. Forms cis-homodimers in the presence of Ca(2+).

It localises to the cell membrane. It catalyses the reaction chloride(in) = chloride(out). The enzyme catalyses L-glutamate(out) = L-glutamate(in). May act as a calcium-independent, swelling-dependent volume-regulated anion channel (VRAC-swell) which plays a pivotal role in the process of regulatory volume decrease (RVD) in the brain through the efflux of anions like chloride and organic osmolytes like glutamate. Probable large-conductance Ca(2+)-activated chloride channel. The sequence is that of Protein tweety homolog 3 (ttyh3) from Xenopus laevis (African clawed frog).